A 482-amino-acid chain; its full sequence is Cysteine--tRNA ligase (482 aa).

Residue C29 coordinates Zn(2+). Residues 31-41 (PTVYDSAHVGH) carry the 'HIGH' region motif. C210, H235, and E239 together coordinate Zn(2+). The short motif at 272 to 276 (KMSKS) is the 'KMSKS' region element. K275 lines the ATP pocket.

This sequence belongs to the class-I aminoacyl-tRNA synthetase family. As to quaternary structure, monomer. Requires Zn(2+) as cofactor.

It localises to the cytoplasm. It catalyses the reaction tRNA(Cys) + L-cysteine + ATP = L-cysteinyl-tRNA(Cys) + AMP + diphosphate. The polypeptide is Cysteine--tRNA ligase (Anaeromyxobacter sp. (strain Fw109-5)).